Consider the following 435-residue polypeptide: Elongation factor 1-alpha (435 aa).

The tr-type G domain occupies 6–231; the sequence is KVHINLVVIG…DALEPPKRPV (226 aa). Positions 15 to 22 are G1; that stretch reads GHVDSGKS. GTP is bound at residue 15 to 22; sequence GHVDSGKS. A G2 region spans residues 71–75; sequence GITID. Residues 92–95 form a G3 region; sequence DAPG. GTP is bound by residues 92–96 and 154–157; these read DAPGH and NKMD. The segment at 154–157 is G4; the sequence is NKMD. Residues 195 to 197 are G5; that stretch reads SGF.

This sequence belongs to the TRAFAC class translation factor GTPase superfamily. Classic translation factor GTPase family. EF-Tu/EF-1A subfamily.

Its subcellular location is the cytoplasm. This protein promotes the GTP-dependent binding of aminoacyl-tRNA to the A-site of ribosomes during protein biosynthesis. The sequence is that of Elongation factor 1-alpha from Tetrahymena pyriformis.